A 760-amino-acid chain; its full sequence is Ferric/cupric reductase transmembrane component 1 (760 aa).

Residues 1-18 (MKIQQLIVFLFAVVLIDA) form the signal peptide. The Extracellular segment spans residues 19–212 (RTPKRYSELD…NNNFNLSINY (194 aa)). Residues asparagine 78, asparagine 91, asparagine 111, asparagine 143, asparagine 155, and asparagine 207 are each glycosylated (N-linked (GlcNAc...) asparagine). Positions 119-177 (TTKSSSGSKTSASASKSSKSTGSSNASKSSTNAHGSNSSTSSTSSSSSKSGKGNSGTST) are disordered. Residues 213–233 (GSGLLGYWAGILAIAIFANMI) form a helical membrane-spanning segment. The Cytoplasmic portion of the chain corresponds to 234-288 (KKMFPSLTNYLSGSISNLFRKHLFLPATFRKKKAQEFSIGVYGFFDGLIPTRLET). The helical transmembrane segment at 289-309 (IIVVIFVVLTGLFSALHIHHV) threads the bilayer. At 310–324 (KDNPQYATKNAELGH) the chain is on the extracellular side. Residues 325–345 (LIADRTGILGTFLIPLLILFG) form a helical membrane-spanning segment. Residues 330 to 445 (TGILGTFLIP…HIVLVVFFVV (116 aa)) enclose the Ferric oxidoreductase domain. Residues 346-371 (GRNNFLQWLTGWDFATFIMYHRWISR) are Cytoplasmic-facing. Histidine 366 and histidine 380 together coordinate heme. A helical membrane pass occupies residues 372–392 (VDVLLIIVHAITFSVSDKATG). Over 393 to 403 (KYNTRMKRDFM) the chain is Extracellular. A helical transmembrane segment spans residues 404-424 (IWGTVSTICGGFILFQAMLFF). The Cytoplasmic portion of the chain corresponds to 425 to 430 (RRKCYE). A helical transmembrane segment spans residues 431–451 (VFFLIHIVLVVFFVVGGYYHL). Heme contacts are provided by histidine 436 and histidine 450. The Extracellular segment spans residues 452 to 760 (ESQGYGDFMW…EYHEQLQTWA (309 aa)). Residues 465 to 583 (AVWAFDRVVR…EGPYGEPSSA (119 aa)) enclose the FAD-binding FR-type domain. 575–578 (GPYG) provides a ligand contact to NADP(+). Asparagine 615 carries N-linked (GlcNAc...) asparagine glycosylation. An NADP(+)-binding site is contributed by 726-727 (CG). Residue asparagine 744 is glycosylated (N-linked (GlcNAc...) asparagine).

Belongs to the ferric reductase (FRE) family. The cofactor is FAD. It depends on heme as a cofactor.

Its subcellular location is the cell membrane. The catalysed reaction is 2 a Fe(II)-siderophore + NADP(+) + H(+) = 2 a Fe(III)-siderophore + NADPH. Ferric reductase responsible for reducing extracellular iron and copper prior to import. Catalyzes the reductive uptake of Fe(3+)-salts and Fe(3+) bound to catecholate or hydroxamate siderophores. Fe(3+) is reduced to Fe(2+), which then dissociates from the siderophore and can be imported by the high-affinity Fe(2+) transport complex in the plasma membrane. Also participates in Cu(2+) reduction and Cu(+) uptake. Involved in maintenance of cell wall integrity (CWI), mitochondrial function, and interaction between the pathogen and the host. This Candida albicans (strain SC5314 / ATCC MYA-2876) (Yeast) protein is Ferric/cupric reductase transmembrane component 1.